The primary structure comprises 205 residues: Small ribosomal subunit protein bS16 (205 aa).

A disordered region spans residues 110 to 205; sequence GEEVKIAVGT…ADDNEEPEDE (96 aa). The span at 123–132 shows a compositional bias: basic and acidic residues; that stretch reads DPLERERERA. Acidic residues predominate over residues 153-205; that stretch reads EETEAEEAEDVETADAEDADAASETDEPEAAADEADETDASADADDNEEPEDE.

It belongs to the bacterial ribosomal protein bS16 family.

This is Small ribosomal subunit protein bS16 from Salinibacter ruber (strain DSM 13855 / M31).